A 1033-amino-acid polypeptide reads, in one-letter code: NACHT, LRR and PYD domains-containing protein 3 (1033 aa).

One can recognise a Pyrin domain in the interval Met1–Glu91. Ser3 carries the post-translational modification Phosphoserine. A disulfide bond links Cys6 and Cys104. Tyr11 is modified (phosphotyrosine). Cys126 carries the S-palmitoyl cysteine lipid modification. The interval Lys127 to Lys130 is required for binding to phosphatidylinositol 4-phosphate (PtdIns4P). Tyr132, Tyr136, and Tyr145 each carry phosphotyrosine; by BTK. Positions Tyr136–Glu206 constitute an FISNA domain. Ser157 is subject to Phosphoserine. Tyr164 is subject to Phosphotyrosine; by BTK. Thr165 contributes to the ATP binding site. Ser194 carries the post-translational modification Phosphoserine; by MAPK8. Ser197 carries the phosphoserine modification. Residues His216–Leu532 enclose the NACHT domain. Gly222–Ile230 lines the ATP pocket. Ser261 carries the phosphoserine modification. Ser291 bears the Phosphoserine; by PKD/PRKD1 mark. A Glycyl lysine isopeptide (Lys-Gly) (interchain with G-Cter in ubiquitin) cross-link involves residue Lys320. Ser330 is subject to Phosphoserine. Residues Leu351–Gln355 carry the KFERQ-like motif 1 motif. Lys426 participates in a covalent cross-link: Glycyl lysine isopeptide (Lys-Gly) (interchain with G-Cter in ubiquitin). His518 is a binding site for ATP. Residues Gln601–Glu605 carry the KFERQ-like motif 2 motif. A Glycyl lysine isopeptide (Lys-Gly) (interchain with G-Cter in ubiquitin) cross-link involves residue Lys687. A phosphoserine mark is found at Ser725 and Ser732. 5 LRR repeats span residues Ser739 to Cys759, Asn768 to Ser789, Lys796 to Cys816, Asn825 to Leu846, and Ser853 to Cys873. A KFERQ-like motif 3 motif is present at residues Gln795–Glu799. Position 803 is a phosphoserine; by CSNK1A1 (Ser803). Residues Cys834, Cys835, and Cys841 are each lipidated (S-palmitoyl cysteine). A Phosphotyrosine modification is found at Tyr858. Lys875 is covalently cross-linked (Glycyl lysine isopeptide (Lys-Gly) (interchain with G-Cter in ubiquitin)). LRR repeat units lie at residues Asn882–Ser903, Asn910–Cys930, Lys939–Thr960, and Ser967–Glu988. The S-palmitoyl cysteine moiety is linked to residue Cys955. Lys970 is covalently cross-linked (Glycyl lysine isopeptide (Lys-Gly) (interchain with G-Cter in ubiquitin)). Positions Glu988–Gln992 match the KFERQ-like motif 4 motif. Ser1032 is modified (phosphoserine).

Belongs to the NLRP family. As to quaternary structure, sensor component of NLRP3 inflammasomes; inflammasomes are supramolecular complexes that assemble in the cytosol in response to pathogens and other damage-associated signals and play critical roles in innate immunity and inflammation. The core of NLRP3 inflammasomes consists of a signal sensor component (NLRP3), an adapter (PYCARD/ASC), which recruits an effector pro-inflammatory caspase (CASP1 and, possibly, CASP4 and CASP5). Homodecamer; inactive NLRP3 forms homodecameric double-ring cages that hide pyrin domains within NACHT-LRR rings to avoid premature activation. Interacts (via pyrin domain) with PYCARD/ASC (via pyrin domain); interaction is direct. Interacts (via LRR repeat domain) with NEK7 (via N-terminus); the interaction is required for the formation of the complex NLRP3:PYCARD, oligomerization of PYCARD/ASC and activation of CASP1. Interacts (via LRR repeat domain) with NR4A1/Nur77 (via N-terminus); the interaction is direct, requires activation of NR4A1 by its ligands NBRE-containing dsDNA and lipopolysaccharide, and stimulates the association of NLRP3 with NEK7 for non-canonical NLRP3 inflammasome activation. Interacts with CARD8; leading to inhibit formation of the NLRP3 inflammasome. Interacts with MEFV; this interaction targets NLRP3 to degradation by autophagy, hence preventing excessive IL1B- and IL18-mediated inflammation. Interacts with EIF2AK2/PKR; this interaction requires EIF2AK2 activity, is accompanied by EIF2AK2 autophosphorylation and promotes inflammasome assembly in response to specific stimuli. Interacts with GBP5 (via DAPIN domain); this interaction promotes inflammasome assembly in response to microbial and soluble, but not crystalline, agents. Interacts with PML (isoform PML-1) (via the leucine-rich repeat (LRR) domain); PML-mediated increase in NLRP3 inflammasome activation does not depend upon this interaction. Interacts (via NACHT domain) with DHX33 (via DEAH box); NLRP3 activation in presence of cytosolic dsRNA is mediated by DHX33. Interacts (via NACHT and LRR domains) with ARRB2; this interaction is direct and inducible by polyunsaturated fatty acids (PUFAs). Interacts (via NACHT domain) with DDX3X under both LPS-primed and inflammasome-activating conditions. Interacts with IRF4 (via the LRR domain); this interaction is direct and is required for optimal IRF4 binding to IL4 promoter and efficient IL4 transactivation during differentiation of Th2 helper T-cells. Interacts with MAVS; promoting localization to mitochondria and activation of the NLRP3 inflammasome. Interacts with MARK4; promoting localization of NLRP3 to the microtubule organizing center (MTOC). Interacts with TRIM50; this interaction also promotes NLRP3 oligomerization and subsequent inflammasome activation. Interacts with IRGM; preventing NLRP3 inflammasome assembly and promoting NLRP3 degradation. Interacts (via KFERQ-like motifs) with HSPA8/HSC70; promoting NLRP3 degradation by the chaperone-mediated autophagy pathway. Interacts (via NACHT and LLR domains) with ABHD8; this interaction is enhanced in the presence of NLRP3 inflammasome inducers, such as ATP, nigericin, silica, or alum. Interaction with ABHD8 leads the recruitment of ZDHHC12, hence facilitating NLRP3 palmitoylation and degradation by the chaperone-mediated autophagy pathway (CMA), therefore attenuating NLRP3 inflammasome activation. Phosphorylation at Ser-194 by MAPK8/JNK1 increases inflammasome activation by promoting deubiquitination by BRCC3 and NLRP3 homooligomerization. Phosphorylation at Ser-803 by CSNK1A1 prevents inflammasome activation by preventing NEK7 recruitment. Phosphorylation at Ser-3 in the pyrin domain inhibits homomultimerization of NLRP3 and activation of the NLRP3 inflammasome: dephosphorylation by protein phosphatase 2A (PP2A) promotes assembly of the NLRP3 inflammasome. Phosphorylation at Ser-291 by PKD/PRKD1 promotes NLRP3 inflammasome assembly. Phosphorylation by ERK1/MAPK3 promotes NLRP3 inflammasome assembly. Phosphorylation by BTK (at Tyr-132, Tyr-136, Tyr-145 and Tyr-164) in the region that mediates binding to phosphatidylinositol phosphate, promotes relocalization of NLRP3 and assembly of the NLRP3 inflammasome. Phosphorylation at Tyr-858 inhibits NLRP3 inflammasome assembly: dephosphorylation by PTPN22 promotes inflammasome activation Phosphorylated by LATS1 and LATS2 at Ser-261 following palmitoylation by ZDHHC1, promoting its relocalization to the microtubule organizing center (MTOC), where NLRP3 is activated by NEK7, leading to inflammasome assembly and activation. Post-translationally, ubiquitinated; undergoes both 'Lys-48'- and 'Lys-63'-linked polyubiquitination. Ubiquitination does not lead to degradation, but inhibits inflammasome activation. Deubiquitination is catalyzed by BRCC3 and associated with NLRP3 activation and inflammasome assembly. This process can be induced by the activation of Toll-like receptors (by LPS), through a non-transcriptional pathway dependent on the mitochondrial production of reactive oxygen species, and by ATP. Ubiquitinated by TRIM31 via 'Lys-48'-linked ubiquitination, leading to its degradation by the proteasome. Ubiquitinated at Lys-687 by the SCF(FBXL2) complex, leading to its degradation by the proteasome. Ubiquitinated by TRIM35 via 'lys-48' and 'Lys-63'-linked ubiquitination leading to inhibition of NLRP3 inflammasome activation. Undergoes 'Lys-27'-linked polyubiquitination by MARCHF5, leading to NLRP3-NEK7 complex formation and NLRP3 oligomerization. In terms of processing, the disulfide bond in the pyrin domain might play a role in reactive oxygen species-mediated activation. Palmitoylation by ZDHHC12 promotes NLRP3 degradation by the chaperone-mediated autophagy pathway (CMA) and therefore limits NLRP3 inflammasome activation. Interaction with ZDHHC12, and hence NLRP3 palmitoylation, is enhanced by ABHD8. Following palmitoylation, HSPA8/HSC70 recognizes and binds the KFERQ-like motifs on NLRP3 and promotes NLRP3 recruitment to lysosomes, where it is degraded via the chaperone-mediated autophagy pathway in a LAMP2-dependent process. Palmitoylation at Cys-834 and Cys-835 by ZDHHC5 enhances its binding to NEK7 leading to inflammasome assembly and activation. Palmitoylation at Cys-126 and Cys-955 by ZDHHC1 facilitates phosphorylation at Ser-261 by LATS1 and LATS2, promoting its relocalization to the microtubule organizing center (MTOC), where NLRP3 is activated by NEK7, leading to inflammasome assembly and activation. Depalmitoylated by ABHD17A. Post-translationally, degraded via selective autophagy following interaction with Irgm1. Irgm1 promotes NLRP3 recruitment to autophagosome membranes, promoting its SQSTM1/p62-dependent autophagy-dependent degradation. In terms of tissue distribution, expressed with high levels in peripheral blood leukocytes, including Th2 lymphocytes and macrophages. Expressed at low levels in resting osteoblasts (at protein level).

It localises to the cytoplasm. It is found in the cytosol. Its subcellular location is the inflammasome. The protein resides in the cytoskeleton. The protein localises to the microtubule organizing center. It localises to the golgi apparatus membrane. It is found in the endoplasmic reticulum. Its subcellular location is the mitochondrion. The protein resides in the secreted. The protein localises to the nucleus. The enzyme catalyses ATP + H2O = ADP + phosphate + H(+). Its activity is regulated as follows. Under resting conditions, NLRP3 binds ADP and is autoinhibited. Inactive NLRP3 forms homodecameric double-ring cages that hide pyrin domains within NACHT-LRR rings to avoid premature activation. NLRP3 activation stimuli include extracellular ATP, nigericin, reactive oxygen species, crystals of monosodium urate or cholesterol, amyloid-beta fibers, environmental or industrial particles and nanoparticles, such as asbestos, silica, aluminum salts, cytosolic dsRNA, etc. Almost all stimuli trigger intracellular K(+) efflux. These stimuli lead to membrane perturbations that induce activation of NLRP3. Upon activation, NLRP3 is transported to microtubule organizing center (MTOC), where it is unlocked by NEK7, leading to its relocalization to dispersed trans-Golgi network (dTGN) vesicle membranes and recruitment of PYCARD/ASC for the formation of an active inflammasome complex. NEK7-activated NLRP3 forms a disk-shaped inflammasome. NLRP3 and PYCARD/ASC interact via their respective pyrin domains; interaction initiates speck formation (nucleation) which greatly enhances further addition of soluble PYCARD/ASC molecules to the speck in a prion-like polymerization process. Clustered PYCARD/ASC nucleates the formation of CASP1 filaments through the interaction of their respective CARD domains, acting as a platform for CASP1 polymerization and activation. Active CASP1 then processes IL1B and IL18 precursors, leading to the release of mature cytokines in the extracellular milieu and inflammatory response. NLRP3 inflammasome assembly is inhibited by IRGM, which impedes NLRP3 oligomerization. NLRP3 inflammasome is inhibited by cyclic AMP (cAMP), which directly binds NLRP3; inhibition is relieved by calcium-sensing receptor CASR, which inhibits production of cAMP. Specifically inhibited by sulfonylurea MCC950 (also named CP-456,773, CRID3), a potent and specific small-molecule inhibitor of the NLRP3 inflammasome that acts by preventing ATP hydrolysis. Its function is as follows. Sensor component of the NLRP3 inflammasome, which mediates inflammasome activation in response to defects in membrane integrity, leading to secretion of inflammatory cytokines IL1B and IL18 and pyroptosis. In response to pathogens and other damage-associated signals that affect the integrity of membranes, initiates the formation of the inflammasome polymeric complex composed of NLRP3, CASP1 and PYCARD/ASC. Recruitment of pro-caspase-1 (proCASP1) to the NLRP3 inflammasome promotes caspase-1 (CASP1) activation, which subsequently cleaves and activates inflammatory cytokines IL1B and IL18 and gasdermin-D (GSDMD), promoting cytokine secretion and pyroptosis. Activation of NLRP3 inflammasome is also required for HMGB1 secretion; stimulating inflammatory responses. Under resting conditions, ADP-bound NLRP3 is autoinhibited. NLRP3 activation stimuli include extracellular ATP, nigericin, reactive oxygen species, crystals of monosodium urate or cholesterol, amyloid-beta fibers, environmental or industrial particles and nanoparticles, such as asbestos, silica, aluminum salts, cytosolic dsRNA, etc. Almost all stimuli trigger intracellular K(+) efflux. These stimuli lead to membrane perturbation and activation of NLRP3. Upon activation, NLRP3 is transported to microtubule organizing center (MTOC), where it is unlocked by NEK7, leading to its relocalization to dispersed trans-Golgi network (dTGN) vesicle membranes and formation of an active inflammasome complex. Associates with dTGN vesicle membranes by binding to phosphatidylinositol 4-phosphate (PtdIns4P). Shows ATPase activity. Functionally, independently of inflammasome activation, regulates the differentiation of T helper 2 (Th2) cells and has a role in Th2 cell-dependent asthma and tumor growth. During Th2 differentiation, required for optimal IRF4 binding to IL4 promoter and for IRF4-dependent IL4 transcription. Binds to the consensus DNA sequence 5'-GRRGGNRGAG-3'. May also participate in the transcription of IL5, IL13, GATA3, CCR3, CCR4 and MAF. The protein is NACHT, LRR and PYD domains-containing protein 3 of Mus musculus (Mouse).